The primary structure comprises 159 residues: Transcription elongation factor GreA (159 aa).

Residues 44–75 (SENAEYDAAREQQSQTEARIADLENKLSTATI) are a coiled coil.

The protein belongs to the GreA/GreB family.

Functionally, necessary for efficient RNA polymerase transcription elongation past template-encoded arresting sites. The arresting sites in DNA have the property of trapping a certain fraction of elongating RNA polymerases that pass through, resulting in locked ternary complexes. Cleavage of the nascent transcript by cleavage factors such as GreA or GreB allows the resumption of elongation from the new 3'terminus. GreA releases sequences of 2 to 3 nucleotides. The polypeptide is Transcription elongation factor GreA (Chlorobium limicola (strain DSM 245 / NBRC 103803 / 6330)).